Here is a 125-residue protein sequence, read N- to C-terminus: Cytochrome c-556 (125 aa).

Heme contacts are provided by methionine 13, cysteine 113, cysteine 116, and histidine 117. Positions 13, 113, 116, and 117 each coordinate heme c.

As to quaternary structure, monomer. Post-translationally, binds 1 heme c group covalently per subunit.

In terms of biological role, low-spin monoheme cytochrome c. This Agrobacterium tumefaciens (strain apple 185) protein is Cytochrome c-556.